The sequence spans 207 residues: Fibroblast growth factor 18 (207 aa).

The signal sequence occupies residues 1–27 (MYSAPSACTCLCLHFLLLCFQVQVLAA). N-linked (GlcNAc...) asparagine glycosylation occurs at Asn39. Cys109 and Cys127 are oxidised to a cystine. Asn137 is a glycosylation site (N-linked (GlcNAc...) asparagine). The segment at 157–183 (GRPRKGPKTRENQQDVHFMKRYPKGQT) is disordered. Over residues 164 to 174 (KTRENQQDVHF) the composition is skewed to basic and acidic residues.

The protein belongs to the heparin-binding growth factors family. In terms of assembly, interacts with FGFR3 and FGFR4. In terms of tissue distribution, mainly expressed in the lung. Not detected in brain, heart, liver, kidney and small intestine.

It is found in the secreted. Plays an important role in the regulation of cell proliferation, cell differentiation and cell migration. Required for normal ossification and bone development. Stimulates hepatic and intestinal proliferation. In Rattus norvegicus (Rat), this protein is Fibroblast growth factor 18 (Fgf18).